Consider the following 271-residue polypeptide: Tryptophan synthase alpha chain (271 aa).

Active-site proton acceptor residues include Glu49 and Asp60.

Belongs to the TrpA family. In terms of assembly, tetramer of two alpha and two beta chains.

It catalyses the reaction (1S,2R)-1-C-(indol-3-yl)glycerol 3-phosphate + L-serine = D-glyceraldehyde 3-phosphate + L-tryptophan + H2O. Its pathway is amino-acid biosynthesis; L-tryptophan biosynthesis; L-tryptophan from chorismate: step 5/5. Functionally, the alpha subunit is responsible for the aldol cleavage of indoleglycerol phosphate to indole and glyceraldehyde 3-phosphate. The protein is Tryptophan synthase alpha chain of Burkholderia ambifaria (strain MC40-6).